Consider the following 189-residue polypeptide: 7-methyl-GTP pyrophosphatase (189 aa).

The Proton acceptor role is filled by D71.

This sequence belongs to the Maf family. YceF subfamily. The cofactor is a divalent metal cation.

Its subcellular location is the cytoplasm. It carries out the reaction N(7)-methyl-GTP + H2O = N(7)-methyl-GMP + diphosphate + H(+). Functionally, nucleoside triphosphate pyrophosphatase that hydrolyzes 7-methyl-GTP (m(7)GTP). May have a dual role in cell division arrest and in preventing the incorporation of modified nucleotides into cellular nucleic acids. In Bdellovibrio bacteriovorus (strain ATCC 15356 / DSM 50701 / NCIMB 9529 / HD100), this protein is 7-methyl-GTP pyrophosphatase.